The primary structure comprises 473 residues: Putative BTB/POZ domain-containing protein R765 (473 aa).

A BTB domain is found at 2-72; sequence TNIQLVIKDD…KIYDREITAD (71 aa).

Belongs to the mimivirus BTB/WD family.

This is Putative BTB/POZ domain-containing protein R765 from Acanthamoeba polyphaga mimivirus (APMV).